The following is a 417-amino-acid chain: S-adenosylmethionine synthase (417 aa).

His16 contributes to the ATP binding site. Residue Asp18 coordinates Mg(2+). Glu44 provides a ligand contact to K(+). Residues Glu57 and Gln100 each contribute to the L-methionine site. The segment at 100-110 (QSPDIAQGVDT) is flexible loop. Residues 175–177 (DGK), 251–252 (KF), Asp260, 266–267 (RK), Ala283, and Lys287 each bind ATP. Residue Asp260 coordinates L-methionine. Lys291 contributes to the L-methionine binding site.

The protein belongs to the AdoMet synthase family. In terms of assembly, homotetramer; dimer of dimers. It depends on Mg(2+) as a cofactor. K(+) serves as cofactor.

Its subcellular location is the cytoplasm. It catalyses the reaction L-methionine + ATP + H2O = S-adenosyl-L-methionine + phosphate + diphosphate. Its pathway is amino-acid biosynthesis; S-adenosyl-L-methionine biosynthesis; S-adenosyl-L-methionine from L-methionine: step 1/1. Catalyzes the formation of S-adenosylmethionine (AdoMet) from methionine and ATP. The overall synthetic reaction is composed of two sequential steps, AdoMet formation and the subsequent tripolyphosphate hydrolysis which occurs prior to release of AdoMet from the enzyme. In Synechococcus elongatus (strain ATCC 33912 / PCC 7942 / FACHB-805) (Anacystis nidulans R2), this protein is S-adenosylmethionine synthase.